Consider the following 130-residue polypeptide: Small ribosomal subunit protein uS11c (130 aa).

This sequence belongs to the universal ribosomal protein uS11 family. In terms of assembly, part of the 30S ribosomal subunit.

The protein resides in the plastid. The protein localises to the chloroplast. This chain is Small ribosomal subunit protein uS11c, found in Porphyra purpurea (Red seaweed).